A 242-amino-acid polypeptide reads, in one-letter code: tRNA (guanine-N(1)-)-methyltransferase (242 aa).

Residues Gly111 and 130–135 (IGDYVL) contribute to the S-adenosyl-L-methionine site.

This sequence belongs to the RNA methyltransferase TrmD family. In terms of assembly, homodimer.

It localises to the cytoplasm. It catalyses the reaction guanosine(37) in tRNA + S-adenosyl-L-methionine = N(1)-methylguanosine(37) in tRNA + S-adenosyl-L-homocysteine + H(+). Specifically methylates guanosine-37 in various tRNAs. The sequence is that of tRNA (guanine-N(1)-)-methyltransferase from Onion yellows phytoplasma (strain OY-M).